We begin with the raw amino-acid sequence, 451 residues long: MTVTTLGHPLAPVFAAAPLSPPTHRDIWWLIIVKTLGVFAFLVLATLFMIWAERRVVARMQQRIGPNRVGPFGLLQSLADGLKLALKEDIVPTLADKAVFILAPVISATPAFLAFAVIPFGPTVSIAGHHTNLQLTDLPVAVLFVLAMSSLGVYGIVLAGWSSGSPYPLLGGVRSAAQVVSYEIAMGLSFVGVFLYSGSLSTSDIVAAQAHRWGILWAGVSFAVYAIAMVGETNRAPFDLPEGETEIVGGFHTEYTSLKFALFYLAEYINMVTVSALMTTLFLGGWRAPWPLSLWSQANVGWWPVLWFLIKLGIVLFVFIWLRGTLPRFRYDQFMQFGWKVLIPVNLTWILVEAAIRVVNVSNWRVWVIPFAIFLALVAVGTYVADLVRQRSEVGDGGPILGPALVPNPDSPYPIPPLPGQRPLVGVLEARTDDFPVGSAAEPRNGGDGDA.

9 helical membrane-spanning segments follow: residues 30-50 (LIIVKTLGVFAFLVLATLFMI), 98-118 (AVFILAPVISATPAFLAFAVI), 138-158 (LPVAVLFVLAMSSLGVYGIVL), 176-196 (AAQVVSYEIAMGLSFVGVFLY), 213-233 (WGILWAGVSFAVYAIAMVGET), 262-282 (LFYLAEYINMVTVSALMTTLF), 302-322 (WWPVLWFLIKLGIVLFVFIWL), 336-356 (QFGWKVLIPVNLTWILVEAAI), and 368-388 (VIPFAIFLALVAVGTYVADLV).

This sequence belongs to the complex I subunit 1 family. NDH-1 is composed of 14 different subunits. Subunits NuoA, H, J, K, L, M, N constitute the membrane sector of the complex.

The protein localises to the cell membrane. The enzyme catalyses a quinone + NADH + 5 H(+)(in) = a quinol + NAD(+) + 4 H(+)(out). Functionally, NDH-1 shuttles electrons from NADH, via FMN and iron-sulfur (Fe-S) centers, to quinones in the respiratory chain. The immediate electron acceptor for the enzyme in this species is believed to be ubiquinone. Couples the redox reaction to proton translocation (for every two electrons transferred, four hydrogen ions are translocated across the cytoplasmic membrane), and thus conserves the redox energy in a proton gradient. This subunit may bind ubiquinone. The protein is NADH-quinone oxidoreductase subunit H of Acidothermus cellulolyticus (strain ATCC 43068 / DSM 8971 / 11B).